Consider the following 477-residue polypeptide: Ribulose bisphosphate carboxylase large chain (477 aa).

Residues 1–2 (MS) constitute a propeptide that is removed on maturation. Residue Pro-3 is modified to N-acetylproline. Lys-14 is modified (N6,N6,N6-trimethyllysine). Residues Asn-123 and Thr-173 each coordinate substrate. Lys-175 serves as the catalytic Proton acceptor. A substrate-binding site is contributed by Lys-177. Residues Lys-201, Asp-203, and Glu-204 each coordinate Mg(2+). Lys-201 is modified (N6-carboxylysine). His-294 serves as the catalytic Proton acceptor. Substrate-binding residues include Arg-295, His-327, and Ser-379.

It belongs to the RuBisCO large chain family. Type I subfamily. As to quaternary structure, heterohexadecamer of 8 large chains and 8 small chains; disulfide-linked. The disulfide link is formed within the large subunit homodimers. Mg(2+) is required as a cofactor. In terms of processing, the disulfide bond which can form in the large chain dimeric partners within the hexadecamer appears to be associated with oxidative stress and protein turnover.

It is found in the plastid. The protein localises to the chloroplast. The catalysed reaction is 2 (2R)-3-phosphoglycerate + 2 H(+) = D-ribulose 1,5-bisphosphate + CO2 + H2O. It catalyses the reaction D-ribulose 1,5-bisphosphate + O2 = 2-phosphoglycolate + (2R)-3-phosphoglycerate + 2 H(+). RuBisCO catalyzes two reactions: the carboxylation of D-ribulose 1,5-bisphosphate, the primary event in carbon dioxide fixation, as well as the oxidative fragmentation of the pentose substrate in the photorespiration process. Both reactions occur simultaneously and in competition at the same active site. The protein is Ribulose bisphosphate carboxylase large chain of Atropa belladonna (Belladonna).